The primary structure comprises 160 residues: MAEKTYPMTQVEKDQLEKELEELKLVRRPEVVERIKIARSYGDLSENSEYDAAKDEQAFVEGQIQILETKIRYAEIIDSDAVAKDEVAIGKTVLVQEVGTNDKDTYHIVGAAGADIFSGKISNESPIAHALIGKKTGDLATIESPAGSYQVEIISVEKTN.

A coiled-coil region spans residues 1-72 (MAEKTYPMTQ…QIQILETKIR (72 aa)).

This sequence belongs to the GreA/GreB family.

Functionally, necessary for efficient RNA polymerase transcription elongation past template-encoded arresting sites. The arresting sites in DNA have the property of trapping a certain fraction of elongating RNA polymerases that pass through, resulting in locked ternary complexes. Cleavage of the nascent transcript by cleavage factors such as GreA or GreB allows the resumption of elongation from the new 3'terminus. GreA releases sequences of 2 to 3 nucleotides. The polypeptide is Transcription elongation factor GreA (Streptococcus agalactiae serotype Ia (strain ATCC 27591 / A909 / CDC SS700)).